The sequence spans 165 residues: Protein SprT (165 aa).

A SprT-like domain is found at 20–163 (EKLAQANLKL…RCVHCGEQLV (144 aa)). Residue histidine 78 participates in Zn(2+) binding. Residue glutamate 79 is part of the active site. Residue histidine 82 participates in Zn(2+) binding.

It belongs to the SprT family. The cofactor is Zn(2+).

The protein localises to the cytoplasm. The chain is Protein SprT from Shigella flexneri serotype 5b (strain 8401).